The following is a 211-amino-acid chain: Lysozyme g (211 aa).

The first 26 residues, 1 to 26 (MLGKNDPMCLVLVLLGLTALLGICQG), serve as a signal peptide directing secretion. Intrachain disulfides connect C30-C86 and C44-C55. Active-site residues include E99 and D112.

This sequence belongs to the glycosyl hydrolase 23 family. As to expression, granulocyte compartment of myelomonocytic cells.

The protein localises to the secreted. It catalyses the reaction Hydrolysis of (1-&gt;4)-beta-linkages between N-acetylmuramic acid and N-acetyl-D-glucosamine residues in a peptidoglycan and between N-acetyl-D-glucosamine residues in chitodextrins.. This is Lysozyme g from Gallus gallus (Chicken).